Consider the following 282-residue polypeptide: Bifunctional protein FolD (282 aa).

NADP(+) is bound by residues 165 to 167 (GAS) and I231.

Belongs to the tetrahydrofolate dehydrogenase/cyclohydrolase family. In terms of assembly, homodimer.

It catalyses the reaction (6R)-5,10-methylene-5,6,7,8-tetrahydrofolate + NADP(+) = (6R)-5,10-methenyltetrahydrofolate + NADPH. The catalysed reaction is (6R)-5,10-methenyltetrahydrofolate + H2O = (6R)-10-formyltetrahydrofolate + H(+). It participates in one-carbon metabolism; tetrahydrofolate interconversion. Catalyzes the oxidation of 5,10-methylenetetrahydrofolate to 5,10-methenyltetrahydrofolate and then the hydrolysis of 5,10-methenyltetrahydrofolate to 10-formyltetrahydrofolate. The protein is Bifunctional protein FolD of Francisella tularensis subsp. holarctica (strain FTNF002-00 / FTA).